The following is a 208-amino-acid chain: Ribosomal RNA small subunit methyltransferase G (208 aa).

S-adenosyl-L-methionine-binding positions include G78, F83, 101–103 (ERS), 129–130 (IE), and R142.

The protein belongs to the methyltransferase superfamily. RNA methyltransferase RsmG family.

It localises to the cytoplasm. Its function is as follows. Specifically methylates the N7 position of a guanine in 16S rRNA. This chain is Ribosomal RNA small subunit methyltransferase G, found in Borrelia garinii subsp. bavariensis (strain ATCC BAA-2496 / DSM 23469 / PBi) (Borreliella bavariensis).